The primary structure comprises 316 residues: 4-hydroxy-3-methylbut-2-enyl diphosphate reductase (316 aa).

Cys-12 contributes to the [4Fe-4S] cluster binding site. (2E)-4-hydroxy-3-methylbut-2-enyl diphosphate is bound by residues His-41 and His-74. The dimethylallyl diphosphate site is built by His-41 and His-74. Residues His-41 and His-74 each coordinate isopentenyl diphosphate. Cys-96 lines the [4Fe-4S] cluster pocket. Residue His-124 coordinates (2E)-4-hydroxy-3-methylbut-2-enyl diphosphate. Position 124 (His-124) interacts with dimethylallyl diphosphate. Residue His-124 participates in isopentenyl diphosphate binding. The Proton donor role is filled by Glu-126. Position 169 (Thr-169) interacts with (2E)-4-hydroxy-3-methylbut-2-enyl diphosphate. Position 199 (Cys-199) interacts with [4Fe-4S] cluster. Positions 227, 228, 229, and 271 each coordinate (2E)-4-hydroxy-3-methylbut-2-enyl diphosphate. Dimethylallyl diphosphate-binding residues include Ser-227, Ser-228, Asn-229, and Ser-271. Isopentenyl diphosphate-binding residues include Ser-227, Ser-228, Asn-229, and Ser-271.

Belongs to the IspH family. [4Fe-4S] cluster is required as a cofactor.

The catalysed reaction is isopentenyl diphosphate + 2 oxidized [2Fe-2S]-[ferredoxin] + H2O = (2E)-4-hydroxy-3-methylbut-2-enyl diphosphate + 2 reduced [2Fe-2S]-[ferredoxin] + 2 H(+). It catalyses the reaction dimethylallyl diphosphate + 2 oxidized [2Fe-2S]-[ferredoxin] + H2O = (2E)-4-hydroxy-3-methylbut-2-enyl diphosphate + 2 reduced [2Fe-2S]-[ferredoxin] + 2 H(+). It functions in the pathway isoprenoid biosynthesis; dimethylallyl diphosphate biosynthesis; dimethylallyl diphosphate from (2E)-4-hydroxy-3-methylbutenyl diphosphate: step 1/1. It participates in isoprenoid biosynthesis; isopentenyl diphosphate biosynthesis via DXP pathway; isopentenyl diphosphate from 1-deoxy-D-xylulose 5-phosphate: step 6/6. Its function is as follows. Catalyzes the conversion of 1-hydroxy-2-methyl-2-(E)-butenyl 4-diphosphate (HMBPP) into a mixture of isopentenyl diphosphate (IPP) and dimethylallyl diphosphate (DMAPP). Acts in the terminal step of the DOXP/MEP pathway for isoprenoid precursor biosynthesis. In Xanthomonas campestris pv. campestris (strain ATCC 33913 / DSM 3586 / NCPPB 528 / LMG 568 / P 25), this protein is 4-hydroxy-3-methylbut-2-enyl diphosphate reductase.